A 348-amino-acid polypeptide reads, in one-letter code: Methylthioribose-1-phosphate isomerase (348 aa).

Substrate-binding positions include 51–53, R94, and Q199; that span reads RGA. Catalysis depends on D240, which acts as the Proton donor. 250-251 contributes to the substrate binding site; that stretch reads NK.

The protein belongs to the eIF-2B alpha/beta/delta subunits family. MtnA subfamily.

It carries out the reaction 5-(methylsulfanyl)-alpha-D-ribose 1-phosphate = 5-(methylsulfanyl)-D-ribulose 1-phosphate. It participates in amino-acid biosynthesis; L-methionine biosynthesis via salvage pathway; L-methionine from S-methyl-5-thio-alpha-D-ribose 1-phosphate: step 1/6. In terms of biological role, catalyzes the interconversion of methylthioribose-1-phosphate (MTR-1-P) into methylthioribulose-1-phosphate (MTRu-1-P). The protein is Methylthioribose-1-phosphate isomerase of Nitrosococcus oceani (strain ATCC 19707 / BCRC 17464 / JCM 30415 / NCIMB 11848 / C-107).